Here is a 440-residue protein sequence, read N- to C-terminus: Enolase 1 (440 aa).

Histidine 161 and glutamate 170 together coordinate substrate. Glutamate 213 serves as the catalytic Proton donor. 3 residues coordinate Mg(2+): aspartate 248, glutamate 297, and aspartate 324. Residues glutamate 297 and aspartate 324 each contribute to the substrate site. The active-site Proton acceptor is lysine 349. Residues 376–379 (SHRS) and lysine 400 each bind substrate.

It belongs to the enolase family. As to quaternary structure, homodimer. Mg(2+) is required as a cofactor.

Its subcellular location is the cytoplasm. It catalyses the reaction (2R)-2-phosphoglycerate = phosphoenolpyruvate + H2O. It participates in carbohydrate degradation; glycolysis; pyruvate from D-glyceraldehyde 3-phosphate: step 4/5. In Candida albicans (strain SC5314 / ATCC MYA-2876) (Yeast), this protein is Enolase 1 (ENO1).